A 557-amino-acid polypeptide reads, in one-letter code: Resveratrol cleavage oxygenase 1 (557 aa).

The segment at 1 to 46 (MAILNDPPSSTTILSLHTPDVPPPSKPTPATTSHPQDSRNPRNLTS) is disordered. Tyr-144 and Lys-177 together coordinate piceatannol. Trans-resveratrol contacts are provided by Tyr-144 and Lys-177. Fe cation contacts are provided by His-211, His-262, and His-334. Glu-404 serves as a coordination point for piceatannol. Glu-404 contacts trans-resveratrol. His-523 contributes to the Fe cation binding site.

It belongs to the carotenoid oxygenase family. It depends on Fe(2+) as a cofactor.

The enzyme catalyses trans-resveratrol + O2 = 3,5-dihydroxybenzaldehyde + 4-hydroxybenzaldehyde. It carries out the reaction piceatannol + O2 = 3,5-dihydroxybenzaldehyde + 3,4-dihydroxybenzaldehyde. Functionally, dioxygenase that cleaves the interphenyl C-alpha-C-beta double bond of resveratrol to yield 3,5-dihydroxybenzaldehyde and 4-hydroxybenzaldehyde. Also cleaves piceatannol, a compound that differs from resveratrol only in the occurrence of an additional hydroxyl group, which leads to the production of 3,4-dihydroxybenzaldehyde and 3,5-hydroxybenzaldehyde. This chain is Resveratrol cleavage oxygenase 1, found in Botryotinia fuckeliana (strain B05.10) (Noble rot fungus).